The primary structure comprises 353 residues: MSASGSDEVAGGGQAGSPQDFQRVLRSFGVEGGQYSYRPFVDRSFDVTGVPEAVERHFDQAEHDTAVEEQVTPAPQIAVAPPPPPVVPDPPAIVTETAPPPPVVVSAPVTYEPPAAAVPAEPPVQEAPVQAAPVPPAPVPPIAEQAPPAAPDPASVPYANVAAAPVPPDPAPVTPAPQARVTGPNTRMVEPFSRPQVRTVQEGATPSRVPSRSMNAFPRTSASSISERPVDRGVADEWSPVPKARLSPRERPRPGDLSFFFQGMRDTRDEKKFFPVASTRSVRSNVSRMTSMTKTDTNSSQASRPGSPVASPDGSPTMAEVFMTLGGRATELLSPRPSLREALLRRRENEEES.

3 disordered regions span residues 1–21 (MSAS…PQDF), 75–94 (PQIA…PAIV), and 117–337 (AVPA…SPRP). Pro residues predominate over residues 80-91 (APPPPPVVPDPP). Composition is skewed to low complexity over residues 117–132 (AVPA…VQAA) and 142–164 (IAEQ…VAAA). The segment covering 165–175 (PVPPDPAPVTP) has biased composition (pro residues). Polar residues-rich tracts occupy residues 196-226 (QVRT…SSIS) and 278-304 (STRS…QASR).

This chain is Cellulose-complementing protein (ccpAX), found in Komagataeibacter xylinus (Gluconacetobacter xylinus).